Consider the following 94-residue polypeptide: Co-chaperonin GroES (94 aa).

The protein belongs to the GroES chaperonin family. In terms of assembly, heptamer of 7 subunits arranged in a ring. Interacts with the chaperonin GroEL.

The protein localises to the cytoplasm. Together with the chaperonin GroEL, plays an essential role in assisting protein folding. The GroEL-GroES system forms a nano-cage that allows encapsulation of the non-native substrate proteins and provides a physical environment optimized to promote and accelerate protein folding. GroES binds to the apical surface of the GroEL ring, thereby capping the opening of the GroEL channel. This Lactobacillus helveticus (strain DPC 4571) protein is Co-chaperonin GroES.